The chain runs to 175 residues: MRALFPGRFQPFHLGHLQVVKWLLDRYEELIIMIGSGQESHSPYNPFTAGERLVMVKESLAETGIDLRKVVIFPVMESFTSKNWIRIVEMYSPHFDVIISGNPLVYTVAKEAGYMVERVPMFNRDIYNATRIRKLIMENDLKWMECVPKSVSQFIRDIKGDERIRDVTKNDYTED.

Belongs to the archaeal NMN adenylyltransferase family.

It localises to the cytoplasm. The catalysed reaction is beta-nicotinamide D-ribonucleotide + ATP + H(+) = diphosphate + NAD(+). Its pathway is cofactor biosynthesis; NAD(+) biosynthesis; NAD(+) from nicotinamide D-ribonucleotide: step 1/1. This is Nicotinamide-nucleotide adenylyltransferase 1 from Sulfolobus acidocaldarius (strain ATCC 33909 / DSM 639 / JCM 8929 / NBRC 15157 / NCIMB 11770).